We begin with the raw amino-acid sequence, 513 residues long: MKNSMNVSEIASIIREKVETFDNPIKRENIGEVISVTDGIALVYGLEKAKFGEKVFFASGVEGIVLDLDHNTAGIVVLGNDRDVKEGDVVKCSGDVVQVPVGHELLGRVVNALGHPMDDGGEIRAKNRMDIESKAPGIIDRKSVHEPLQTGIKIIDLLIPIGRGQRELIIGDRQIGKTTIALDTIINQKKVNDEVNENQKVYCVYVAIGQKISTVAKVVNKLKESGALEYTTVVVASASDCAPMQFLAPYAGCTIGEFFRDNGMHCLIIYDDLSKHAVAYRQMSLLLRRPPGREAYPGDIFYVHSRLLERAAKMSDKKGQGSLTALPIVETQAGDVSAYVPTNVISITDGQIFLESELFYKGFRPAVNIGLSVSRVGSAAQLKSVKKVAGSIKLSLAQYRELEDFAKFGSDLDASVQLSLNKGKYLVELLKQKQHLPMSIEEQVVLMYIFSNLYNQLSKIQISNVNKFEHDLVNYFRTVHPGVLKKLSNDMNGDIKGDIFNIVSNFVTQFNCV.

171 to 178 is an ATP binding site; it reads GDRQIGKT.

Belongs to the ATPase alpha/beta chains family. As to quaternary structure, F-type ATPases have 2 components, CF(1) - the catalytic core - and CF(0) - the membrane proton channel. CF(1) has five subunits: alpha(3), beta(3), gamma(1), delta(1), epsilon(1). CF(0) has three main subunits: a(1), b(2) and c(9-12). The alpha and beta chains form an alternating ring which encloses part of the gamma chain. CF(1) is attached to CF(0) by a central stalk formed by the gamma and epsilon chains, while a peripheral stalk is formed by the delta and b chains.

The protein resides in the cell membrane. The catalysed reaction is ATP + H2O + 4 H(+)(in) = ADP + phosphate + 5 H(+)(out). Functionally, produces ATP from ADP in the presence of a proton gradient across the membrane. The alpha chain is a regulatory subunit. The protein is ATP synthase subunit alpha of Wolbachia pipientis wMel.